The chain runs to 406 residues: Methylthioribose-1-phosphate isomerase (406 aa).

Residue D277 is the Proton donor of the active site.

The protein belongs to the eIF-2B alpha/beta/delta subunits family. MtnA subfamily.

The protein localises to the cytoplasm. It is found in the nucleus. It catalyses the reaction 5-(methylsulfanyl)-alpha-D-ribose 1-phosphate = 5-(methylsulfanyl)-D-ribulose 1-phosphate. It participates in amino-acid biosynthesis; L-methionine biosynthesis via salvage pathway; L-methionine from S-methyl-5-thio-alpha-D-ribose 1-phosphate: step 1/6. Its function is as follows. Catalyzes the interconversion of methylthioribose-1-phosphate (MTR-1-P) into methylthioribulose-1-phosphate (MTRu-1-P). This Debaryomyces hansenii (strain ATCC 36239 / CBS 767 / BCRC 21394 / JCM 1990 / NBRC 0083 / IGC 2968) (Yeast) protein is Methylthioribose-1-phosphate isomerase.